We begin with the raw amino-acid sequence, 257 residues long: RING1 and YY1-binding protein B (257 aa).

2 disordered regions span residues 1–24 (MGDK…GFWD) and 45–257 (RKGT…DESF). A RanBP2-type zinc finger spans residues 19–48 (DNGFWDCSVCTFRNSAEAFKCSICDVRKGT). Residues 74–129 (PKKEKKEKPERPEKDRAEEERPDINPPDEHPVEQRDKDKSEKEQPEKEKKDREKEI) are compositionally biased toward basic and acidic residues. Residues 149 to 168 (HQSPPSERNSIQSGKSTTKT) show a composition bias toward polar residues. Basic residues predominate over residues 169 to 178 (KNSHNSRPKL). The segment covering 209–233 (TSSTSSSTVTSSASSEQQHQSSGSE) has biased composition (low complexity).

The protein resides in the nucleus. It is found in the cytoplasm. Its function is as follows. May be implicated in the regulation of the transcription as a repressor of the transcriptional activity of E4TF1. In Danio rerio (Zebrafish), this protein is RING1 and YY1-binding protein B (rybpb).